A 159-amino-acid chain; its full sequence is Probable inactive acireductone dioxygenase 1 (159 aa).

The protein belongs to the acireductone dioxygenase (ARD) family.

The protein resides in the cytoplasm. It is found in the nucleus. Its function is as follows. Probable inactive acireductone dioxygenase. The chain is Probable inactive acireductone dioxygenase 1 from Caenorhabditis elegans.